The primary structure comprises 482 residues: Cobyrinate a,c-diamide synthase (482 aa).

Positions 248-441 (RLAIAQDQAF…LHLHWGSQIS (194 aa)) constitute a GATase cobBQ-type domain. Cysteine 331 acts as the Nucleophile in catalysis.

This sequence belongs to the CobB/CbiA family. Requires Mg(2+) as cofactor.

The enzyme catalyses cob(II)yrinate + 2 L-glutamine + 2 ATP + 2 H2O = cob(II)yrinate a,c diamide + 2 L-glutamate + 2 ADP + 2 phosphate + 2 H(+). It functions in the pathway cofactor biosynthesis; adenosylcobalamin biosynthesis; cob(II)yrinate a,c-diamide from sirohydrochlorin (anaerobic route): step 10/10. Its function is as follows. Catalyzes the ATP-dependent amidation of the two carboxylate groups at positions a and c of cobyrinate, using either L-glutamine or ammonia as the nitrogen source. The protein is Cobyrinate a,c-diamide synthase of Synechocystis sp. (strain ATCC 27184 / PCC 6803 / Kazusa).